The chain runs to 407 residues: Semenogelin-2 (407 aa).

A signal peptide spans 1 to 23 (MKSIILFVLSLVLILEKQAAVMG). 4 disordered regions span residues 25-60 (KDGS…TKSK), 133-158 (GQAH…LSSQ), 173-192 (KEQA…GSQS), and 272-407 (NLNQ…NKIS). 3 stretches are compositionally biased toward polar residues: residues 31–40 (QLPSGSSQFP), 137–158 (CGTQ…LSSQ), and 174–192 (EQAS…GSQS). Positions 292–310 (RTEERQLNHGEKSVQKDVS) are enriched in basic and acidic residues. A compositionally biased stretch (polar residues) spans 325–334 (KSQNQVTIHS). The segment covering 335-345 (QDQEHGHKENK) has biased composition (basic and acidic residues). The segment covering 372 to 397 (GSISIQTEEQIHGKSQNXVRIPSQAQ) has biased composition (polar residues).

This sequence belongs to the semenogelin family. In terms of assembly, interacts with SERPINA5.

It localises to the secreted. Participates in the formation of a gel matrix (sperm coagulum) entrapping the accessory gland secretions and ejaculated spermatozoa. The sequence is that of Semenogelin-2 (SEMG2) from Pan troglodytes (Chimpanzee).